We begin with the raw amino-acid sequence, 155 residues long: Small ribosomal subunit protein uS7cz/uS7cy (155 aa).

It belongs to the universal ribosomal protein uS7 family. In terms of assembly, part of the 30S ribosomal subunit.

Its subcellular location is the plastid. The protein localises to the chloroplast. In terms of biological role, one of the primary rRNA binding proteins, it binds directly to 16S rRNA where it nucleates assembly of the head domain of the 30S subunit. This is Small ribosomal subunit protein uS7cz/uS7cy (rps7-A) from Crucihimalaya wallichii (Rock-cress).